Consider the following 287-residue polypeptide: 2' cyclic ADP-D-ribose synthase BtTIR (287 aa).

The region spanning 155 to 287 (KQYDFFISHA…DDIVENLKNL (133 aa)) is the TIR domain. The active site involves E230.

Homodimer.

It carries out the reaction NAD(+) = 2'cADPR + nicotinamide + H(+). In terms of biological role, NAD(+) hydrolase (NADase) that cleaves NAD(+) into nicotinamide and 2' cyclic ADP-D-ribose (2'cADPR). In Bacteroides thetaiotaomicron, this protein is 2' cyclic ADP-D-ribose synthase BtTIR.